The chain runs to 127 residues: Putative B3 domain-containing protein At4g12617 (127 aa).

The TF-B3 DNA-binding region spans 35-127 (IMMPKTLLEA…HTRLNFKHVA (93 aa)).

It localises to the nucleus. In Arabidopsis thaliana (Mouse-ear cress), this protein is Putative B3 domain-containing protein At4g12617.